Reading from the N-terminus, the 567-residue chain is Proline--tRNA ligase (567 aa).

The protein belongs to the class-II aminoacyl-tRNA synthetase family. ProS type 1 subfamily. In terms of assembly, homodimer.

The protein resides in the cytoplasm. The catalysed reaction is tRNA(Pro) + L-proline + ATP = L-prolyl-tRNA(Pro) + AMP + diphosphate. Catalyzes the attachment of proline to tRNA(Pro) in a two-step reaction: proline is first activated by ATP to form Pro-AMP and then transferred to the acceptor end of tRNA(Pro). As ProRS can inadvertently accommodate and process non-cognate amino acids such as alanine and cysteine, to avoid such errors it has two additional distinct editing activities against alanine. One activity is designated as 'pretransfer' editing and involves the tRNA(Pro)-independent hydrolysis of activated Ala-AMP. The other activity is designated 'posttransfer' editing and involves deacylation of mischarged Ala-tRNA(Pro). The misacylated Cys-tRNA(Pro) is not edited by ProRS. The polypeptide is Proline--tRNA ligase (Stenotrophomonas maltophilia (strain R551-3)).